The chain runs to 253 residues: 7-carboxy-7-deazaguanine synthase (253 aa).

Substrate contacts are provided by residues 12–14 (WQG) and R32. One can recognise a Radical SAM core domain in the interval 23-253 (AFGRRQIFVR…FQVHKYLNVL (231 aa)). [4Fe-4S] cluster-binding residues include C36, C40, and C43. Residue S45 coordinates Mg(2+). T98 is a binding site for substrate. G100 contacts S-adenosyl-L-methionine.

Belongs to the radical SAM superfamily. 7-carboxy-7-deazaguanine synthase family. As to quaternary structure, homodimer. Requires [4Fe-4S] cluster as cofactor. It depends on S-adenosyl-L-methionine as a cofactor. Mg(2+) is required as a cofactor.

It catalyses the reaction 6-carboxy-5,6,7,8-tetrahydropterin + H(+) = 7-carboxy-7-deazaguanine + NH4(+). It participates in purine metabolism; 7-cyano-7-deazaguanine biosynthesis. In terms of biological role, catalyzes the complex heterocyclic radical-mediated conversion of 6-carboxy-5,6,7,8-tetrahydropterin (CPH4) to 7-carboxy-7-deazaguanine (CDG), a step common to the biosynthetic pathways of all 7-deazapurine-containing compounds. This chain is 7-carboxy-7-deazaguanine synthase, found in Thermococcus kodakarensis (strain ATCC BAA-918 / JCM 12380 / KOD1) (Pyrococcus kodakaraensis (strain KOD1)).